Reading from the N-terminus, the 3011-residue chain is MSTNPKPQRKTKRNTNRRPQDVKFPGGGQIVGGVYLLPRRGPRLGVRATRKTSERSQPRGRRQPIPKARRPEGRTWAQPGYPWPLYGNEGCGWAGWLLSPRGSRPSWGPTDPRRRSRNLGKVIDTLTCGFADLMGYIPLVGAPLGGAARALAHGVRVLEDGVNYATGNLPGCSFSIFLLALLSCLTVPASAYQVRNSSGLYHVTNDCPNSSVVYEAADAILHTPGCVPCVREGNASRCWVAVTPTVATRDGKLPTTQLRRHIDLLVGSATLCSALYVGDLCGSVFLVGQLFTFSPRHHWTTQDCNCSIYPGHITGHRMAWNMMMNWSPTAALVVAQLLRIPQAIMDMIAGAHWGVLAGIKYFSMVGNWAKVLVVLLLFAGVDAETHVTGGNAGRTTAGLVGLLTPGAKQNIQLINTNGSWHINSTALNCNESLNTGWLAGLFYQHKFNSSGCPERLASCRRLTDFAQGWGPISYANGSGLDERPYCWHYPPRPCGIVPAKSVCGPVYCFTPSPVVVGTTDRSGAPTYSWGANDTDVFVLNNTRPPLGNWFGCTWMNSTGFTKVCGAPPCVIGGVGNNTLLCPTDCFRKYPEATYSRCGSGPRITPRCMVDYPYRLWHYPCTINYTIFKVRMYVGGVEHRLEAACNWTRGERCDLEDRDRSELSPLLLSTTQWQVLPCSFTTLPALSTGLIHLHQNIVDVQYLYGVGSSIASWAIKWEYVVLLFLLLADARVCSCLWMMLLISQAEAALENLVILNAASLAGTHGLVSFLVFFCFAWYLKGRWVPGAVYALYGMWPLLLLLLALPQRAYALDTEVAASCGGVVLVGLMALTLSPYYKRYISWCMWWLQYFLTRVEAQLHVWVPPLNVRGGRDAVILLTCVVHPALVFDITKLLLAIFGPLWILQASLLKVPYFVRVQGLLRICALARKIAGGHYVQMAIIKLGALTGTCVYNHLAPLRDWAHNGLRDLAVAVEPVVFSRMETKLITWGADTAACGDIINGLPVSARRGQEILLGPADGMVSKGWRLLAPITAYAQQTRGLLGCIITSLTGRDKNQVEGEVQIVSTATQTFLATCINGVCWTVYHGAGTRTIASPKGPVIQTYTNVDQDLVGWPAPQGSRSLTPCTCGSSDLYLVTRHADVIPVRRRGDSRGSLLSPRPISYLKGSSGGPLLCPTGHAVGLFRAAVCTRGVAKAVDFIPVENLETTMRSPVFTDNSSPPAVPQSFQVAHLHAPTGSGKSTKVPAAYAAKGYKVLVLNPSVAATLGFGAYMSKAHGVDPNIRTGVRTITTGSPITYSTYGKFLADAGCSGGAYDIIICDECHSTDATSISGIGTVLDQAETAGARLVVLATATPPGSVTVSHPNIEEVALSTTGEIPFYGKAIPLEVIKGGRHLIFCHSKKKCDELAAKLVALGINAVAYYRGLDVSVIPTSGDVVVVSTDALMTGFTGDFDSVIDCNTCVTQTVDFSLDPTFTIETTTLPQDAVSRTQRRGRTGRGKPGIYRFVAPGERPSGMFDSSVLCECYDAGCAWYELTPAETTVRLRAYMNTPGLPVCQDHLGFWEGVFTGLTHIDAHFLSQTKQSGENFPYLVAYQATVCARAQAPPPSWDQMRKCLIRLKPTLHGPTPLLYRLGAVQNEVTLTHPITKYIMTCMSADLEVVTSTWVLVGGVLAALAAYCLSTGCVVIVGRIVLSGKPAIIPDREVLYQEFDEMEECSQHLPYIEQGMMLAEQFKQKALGLLQTASRHAEVITPAVQTNWQKLEVFWAKHMWNFISGIQYLAGLSTLPGNPAIASLMAFTAAVTSPLTTGQTLLFNILGGWVAAQLAAPGAATAFVGAGLAGAALDSVGLGKVLVDILAGYGAGVAGALVAFKIMSGEVPSTEDLVNLLPAILSPGALAVGVVFASILRRRVGPGEGAVQWMNRLIAFASRGNHVSPTHYVPESDAAARVTAILSSLTVTQLLRRLHQWISSECTTPCSGSWLRDIWDWICEVLSDFKTWLKAKLMPQLPGIPFVSCQRGYRGVWRGDGIMHTRCHCGAEITGHVKNGTMRIVGPRTCKNMWSGTFFINAYTTGPCTPLPAPNYKFALWRVSAEEYVEIRRVGDFHYVSGMTTDNLKCPCQIPSPEFFTELDGVRLHRFAPPCKPLLREEVSFRVGLHEYPVGSQLPCEPEPDVAVLTSMLTDPSHITAEAAGRRLARGSPPSMASSSASQLSAPSLKATCTANHDSPDAELIEANLLWRQEMGGNITRVESENKVVILDSFDPLVAEEDEREVSVPAEILRKSRRFAPALPVWARPDYNPLLVETWKKPDYEPPVVHGCPLPPPRSPPVPPPRKKRTVVLTESTLPTALAELATKSFGSSSTSGITGDNTTTSSEPAPSGCPPDSDVESYSSMPPLEGEPGDPDLSDGSWSTVSSGADTEDVVCCSMSYSWTGALVTPCAAEEQKLPINALSNSLLRHHNLVYSTTSRSACQRKKKVTFDRLQVLDSHYQDVLKEVKAAASKVKANLLSVEEACSLAPPHSAKSKFGYGAKDVRCHARKAVAHINSVWKDLLEDSVTPIDTTIMAKNEVFCVQPEKGGRKPARLIVFPDLGVRVCEKMALYDVVSKLPLAVMGSSYGFQYSPGQRVEFLVQAWKSKKTPMGLSYDTRCFDSTVTESDIRTEEAIYQCCDLDPQARVAIKSLTERLYVGGPLTNSRGENCGYRRCRASRVLTTSCGNTLTRYIKARAACRAAGLQDCTMLVCGDDLVVICESAGVQEDAASLRAFTEAMTRYSAPPGDPPQPEYDLELITSCSSNVSVAHDGAGKRVYYLTRDPTTPLARAAWETARHTPVNSWLGNIIMFAPTLWARMILMTHFFSVLIARDQLEQALNCEIYGACYSIEPLDLPPIIQRLHGLSAFSLHSYSPGEINRVAACLRKLGVPPLRAWRHRAWSVRARLLARGGKAAICGKYLFNWAVRTKLKLTPITAAGRLDLSGWFTAGYSGGDIYHSVSHARPRWFWFCLLLLAAGVGIYLLPNR.

At Ser-2 the chain carries N-acetylserine; by host. The interval 2-23 (STNPKPQRKTKRNTNRRPQDVK) is interaction with STAT1. An interaction with EIF2AK2/PKR region spans residues 2–58 (STNPKPQRKTKRNTNRRPQDVKFPGGGQIVGGVYLLPRRGPRLGVRATRKTSERSQP). The interval 2–59 (STNPKPQRKTKRNTNRRPQDVKFPGGGQIVGGVYLLPRRGPRLGVRATRKTSERSQPR) is interaction with DDX3X. The segment at 2-75 (STNPKPQRKT…PKARRPEGRT (74 aa)) is disordered. Topologically, residues 2-168 (STNPKPQRKT…EDGVNYATGN (167 aa)) are cytoplasmic. Short sequence motifs (nuclear localization signal) lie at residues 5-13 (PKPQRKTKR) and 38-43 (PRRGPR). Residues 7–16 (PQRKTKRNTN) show a composition bias toward basic residues. Over residues 32–47 (GGVYLLPRRGPRLGVR) the composition is skewed to low complexity. Ser-53 carries the phosphoserine; by host modification. 2 short sequence motifs (nuclear localization signal) span residues 58–64 (PRGRRQP) and 66–71 (PKARRP). Basic residues predominate over residues 58–68 (PRGRRQPIPKA). Position 99 is a phosphoserine; by host (Ser-99). The interval 112–152 (PRRRSRNLGKVIDTLTCGFADLMGYIPLVGAPLGGAARALA) is important for endoplasmic reticulum and mitochondrial localization. Ser-116 bears the Phosphoserine; by host PKA mark. The tract at residues 122–173 (VIDTLTCGFADLMGYIPLVGAPLGGAARALAHGVRVLEDGVNYATGNLPGCS) is interaction with APOA2. The interval 164–167 (YATG) is important for lipid droplets localization. A helical transmembrane segment spans residues 169 to 189 (LPGCSFSIFLLALLSCLTVPA). Residues 178-191 (LLALLSCLTVPASA) constitute a propeptide, ER anchor for the core protein, removed in mature form by host signal peptidase. Residues 190–358 (SAYQVRNSSG…AGAHWGVLAG (169 aa)) are Lumenal-facing. N-linked (GlcNAc...) asparagine; by host glycosylation is found at Asn-196, Asn-209, and Asn-234. Residues 265–296 (LVGSATLCSALYVGDLCGSVFLVGQLFTFSPR) are important for fusion. Asn-305 is a glycosylation site (N-linked (GlcNAc...) asparagine; by host). Residues 359-379 (IKYFSMVGNWAKVLVVLLLFA) traverse the membrane as a helical segment. Topologically, residues 380 to 725 (GVDAETHVTG…WEYVVLLFLL (346 aa)) are lumenal. The segment at 385-411 (THVTGGNAGRTTAGLVGLLTPGAKQNI) is HVR1. 4 N-linked (GlcNAc...) (high mannose) asparagine; by host glycosylation sites follow: Asn-417, Asn-423, Asn-430, and Asn-448. Cystine bridges form between Cys-429/Cys-552, Cys-452/Cys-459, Cys-486/Cys-494, and Cys-503/Cys-508. The tract at residues 474 to 479 (YANGSG) is HVR2. N-linked (GlcNAc...) (high mannose) asparagine; by host glycosylation is present at Asn-476. The CD81-binding 1 stretch occupies residues 480–493 (LDERPYCWHYPPRP). N-linked (GlcNAc...) (high mannose) asparagine; by host glycans are attached at residues Asn-532 and Asn-540. The interval 544–551 (PPLGNWFG) is CD81-binding 2. Asn-556 carries an N-linked (GlcNAc...) (high mannose) asparagine; by host glycan. A disulfide bridge links Cys-564 with Cys-569. N-linked (GlcNAc...) (high mannose) asparagine; by host glycosylation occurs at Asn-576. 3 disulfides stabilise this stretch: Cys-581-Cys-585, Cys-597-Cys-620, and Cys-607-Cys-644. Residues Asn-623 and Asn-645 are each glycosylated (N-linked (GlcNAc...) (high mannose) asparagine; by host). Cys-652 and Cys-677 are joined by a disulfide. An EIF2AK2/eIF2-alpha phosphorylation homology domain (PePHD) region spans residues 660 to 671 (SELSPLLLSTTQ). The chain crosses the membrane as a helical span at residues 726-746 (LADARVCSCLWMMLLISQAEA). Over 747–757 (ALENLVILNAA) the chain is Lumenal. A helical membrane pass occupies residues 758-778 (SLAGTHGLVSFLVFFCFAWYL). The Cytoplasmic portion of the chain corresponds to 779–781 (KGR). A helical transmembrane segment spans residues 782 to 803 (WVPGAVYALYGMWPLLLLLLAL). The Lumenal segment spans residues 804 to 813 (PQRAYALDTE). Residues 814–834 (VAASCGGVVLVGLMALTLSPY) form a helical membrane-spanning segment. The Cytoplasmic portion of the chain corresponds to 835–838 (YKRY). A helical transmembrane segment spans residues 839–859 (ISWCMWWLQYFLTRVEAQLHV). At 860 to 881 (WVPPLNVRGGRDAVILLTCVVH) the chain is on the lumenal side. The chain crosses the membrane as a helical span at residues 882–902 (PALVFDITKLLLAIFGPLWIL). The region spanning 899–1026 (LWILQASLLK…GMVSKGWRLL (128 aa)) is the Peptidase C18 domain. The Cytoplasmic portion of the chain corresponds to 903–1657 (QASLLKVPYF…CMSADLEVVT (755 aa)). Positions 904-1206 (ASLLKVPYFV…PVENLETTMR (303 aa)) are protease NS2-3. Residue Cys-922 is the site of S-palmitoyl cysteine; by host attachment. Residues 929 to 949 (AGGHYVQMAIIKLGALTGTCV) form an interaction with host SCPS1 region. Residues His-952, Glu-972, and Cys-993 each act as for protease NS2 activity; shared with dimeric partner in the active site. The Peptidase S29 domain occupies 1027-1208 (APITAYAQQT…ENLETTMRSP (182 aa)). Residues His-1083 and Asp-1107 each act as charge relay system; for serine protease NS3 activity in the active site. 2 residues coordinate Zn(2+): Cys-1123 and Cys-1125. The active-site Charge relay system; for serine protease NS3 activity is Ser-1165. The Zn(2+) site is built by Cys-1171 and His-1175. The Helicase ATP-binding domain occupies 1217–1369 (PAVPQSFQVA…PNIEEVALST (153 aa)). 1230–1237 (APTGSGKS) is an ATP binding site. Mg(2+) is bound by residues Ser-1237 and Glu-1317. The DECH box motif lies at 1316 to 1319 (DECH). Residues 1486 to 1497 (QRRGRTGRGKPG) are RNA-binding. A helical transmembrane segment spans residues 1658–1678 (STWVLVGGVLAALAAYCLSTG). The NS3-binding stretch occupies residues 1679 to 1690 (CVVIVGRIVLSG). Over 1679–1805 (CVVIVGRIVL…AVTSPLTTGQ (127 aa)) the chain is Cytoplasmic. The chain crosses the membrane as a helical span at residues 1806–1824 (TLLFNILGGWVAAQLAAPG). Residues 1825-1828 (AATA) are Lumenal-facing. Residues 1829 to 1849 (FVGAGLAGAALDSVGLGKVLV) form a helical membrane-spanning segment. Positions 1833–1861 (GLAGAALDSVGLGKVLVDILAGYGAGVAG) are glycine zipper. Residue Asp-1850 is a topological domain, cytoplasmic. A helical membrane pass occupies residues 1851 to 1871 (ILAGYGAGVAGALVAFKIMSG). The Lumenal portion of the chain corresponds to 1872 to 1881 (EVPSTEDLVN). The chain crosses the membrane as a helical span at residues 1882-1902 (LLPAILSPGALAVGVVFASIL). Over 1903-1972 (RRRVGPGEGA…WISSECTTPC (70 aa)) the chain is Cytoplasmic. Cys-1968 is lipidated: S-palmitoyl cysteine; by host. Residue Cys-1972 is the site of S-palmitoyl cysteine; by host; partial attachment. The stretch at 1973–2003 (SGSWLRDIWDWICEVLSDFKTWLKAKLMPQL) is an intramembrane region. Residues 1978–1998 (RDIWDWICEVLSDFKTWLKAK) are membrane-binding. Residues 2004-2990 (PGIPFVSCQR…YHSVSHARPR (987 aa)) are Cytoplasmic-facing. Residues 2005–2221 (GIPFVSCQRG…KATCTANHDS (217 aa)) form a D1; RNA-binding region. Residues Cys-2011, Cys-2029, Cys-2031, and Cys-2052 each coordinate Zn(2+). The tract at residues 2120 to 2208 (EFFTELDGVR…ASSSASQLSA (89 aa)) is FKBP8-binding. A transcriptional activation region spans residues 2120–2332 (EFFTELDGVR…PVPPPRKKRT (213 aa)). The segment at 2135–2139 (PPCKP) is interaction with non-structural protein 4A. The tract at residues 2189–2441 (RLARGSPPSM…TPCAAEEQKL (253 aa)) is interaction with host SKP2. The residue at position 2194 (Ser-2194) is a Phosphoserine; by host; in p56. At Ser-2197 the chain carries Phosphoserine; by host; in p58. Ser-2201 is modified (phosphoserine; by host; in p56 and p58, regulates intracellular NS5A distribution). 3 positions are modified to phosphoserine; by host; in p58: Ser-2204, Ser-2207, and Ser-2210. An ISDR region spans residues 2210–2249 (SLKATCTANHDSPDAELIEANLLWRQEMGGNITRVESENK). The segment at 2210 to 2275 (SLKATCTANH…REVSVPAEIL (66 aa)) is interaction with EIF2AK2/PKR. The tract at residues 2223 to 2315 (DAELIEANLL…YEPPVVHGCP (93 aa)) is D2. The segment at 2224-2315 (AELIEANLLW…YEPPVVHGCP (92 aa)) is disordered. An NS4B-binding region spans residues 2249–2306 (KVVILDSFDPLVAEEDEREVSVPAEILRKSRRFAPALPVWARPDYNPLLVETWKKPDY). Positions 2281 to 2297 (FAPALPVWARPDYNPLL) are interaction with human PPIA/CYPA. A compositionally biased stretch (pro residues) spans 2315–2326 (PLPPPRSPPVPP). At Ser-2321 the chain carries Phosphoserine; by host. An SH3-binding motif is present at residues 2322–2325 (PPVP). Positions 2326–2334 (PPRKKRTVV) match the Nuclear localization signal motif. The D3 stretch occupies residues 2329-2420 (KKRTVVLTES…GADTEDVVCC (92 aa)). Residues 2332-2441 (TVVLTESTLP…TPCAAEEQKL (110 aa)) are interaction with host IFI27. The disordered stretch occupies residues 2346–2409 (ELATKSFGSS…LSDGSWSTVS (64 aa)). The span at 2349–2369 (TKSFGSSSTSGITGDNTTTSS) shows a compositional bias: low complexity. Lys-2350 is covalently cross-linked (Glycyl lysine isopeptide (Lys-Gly) (interchain with G-Cter in ubiquitin)). The V3 stretch occupies residues 2354-2377 (SSSTSGITGDNTTTSSEPAPSGCP). The segment at 2367 to 2417 (TSSEPAPSGCPPDSDVESYSSMPPLEGEPGDPDLSDGSWSTVSSGADTEDV) is interaction with host VAPB. 2 positions are modified to phosphoserine; by host: Ser-2449 and Ser-2462. The RdRp catalytic domain occupies 2634-2752 (PMGLSYDTRC…ICESAGVQED (119 aa)). The Mg(2+) site is built by Asp-2640, Asp-2738, and Asp-2739. The helical transmembrane segment at 2991 to 3011 (WFWFCLLLLAAGVGIYLLPNR) threads the bilayer.

This sequence belongs to the hepacivirus polyprotein family. As to quaternary structure, homooligomer. Interacts with E1 (via C-terminus). Interacts with the non-structural protein 5A. Interacts (via N-terminus) with host STAT1 (via SH2 domain); this interaction results in decreased STAT1 phosphorylation and ubiquitin-mediated proteasome-dependent STAT1 degradation, leading to decreased IFN-stimulated gene transcription. Interacts with host STAT3; this interaction constitutively activates STAT3. Associates with host LTBR receptor. Interacts with host TNFRSF1A receptor and possibly induces apoptosis. Interacts with host HNRPK. Interacts with host YWHAE. Interacts with host UBE3A/E6AP. Interacts with host DDX3X. Interacts with host APOA2. Interacts with host RXRA protein. Interacts with host SP110 isoform 3/Sp110b; this interaction sequesters the transcriptional corepressor SP110 away from the nucleus. Interacts with host CREB3 nuclear transcription protein; this interaction triggers cell transformation. Interacts with host ACY3. Interacts with host C1QR1. Interacts with host RBM24; this interaction, which enhances the interaction of the mature core protein with 5'-UTR, may inhibit viral translation and favor replication. Interacts (via N-terminus) with host EIF2AK2/PKR (via N-terminus); this interaction induces the autophosphorylation of EIF2AK2. Part of the viral assembly initiation complex composed of NS2, E1, E2, NS3, NS4A, NS5A and the mature core protein. In terms of assembly, forms a heterodimer with envelope glycoprotein E2. Interacts with mature core protein. Interacts with protease NS2. The heterodimer E1/E2 interacts with host CLDN1; this interaction plays a role in viral entry into host cell. Interacts with host SPSB2 (via C-terminus). Part of the viral assembly initiation complex composed of NS2, E1, E2, NS3, NS4A, NS5A and the mature core protein. Interacts with host NEURL3; this interaction prevents E1 binding to glycoprotein E2. Forms a heterodimer with envelope glycoprotein E1. Interacts with host CD81 and SCARB1 receptors; these interactions play a role in viral entry into host cell. Interacts with host EIF2AK2/PKR; this interaction inhibits EIF2AK2 and probably allows the virus to evade the innate immune response. Interacts with host CD209/DC-SIGN and CLEC4M/DC-SIGNR. Interact with host SPCS1; this interaction is essential for viral particle assembly. Interacts with protease NS2. The heterodimer E1/E2 interacts with host CLDN1; this interaction plays a role in viral entry into host cell. Part of the viral assembly initiation complex composed of NS2, E1, E2, NS3, NS4A, NS5A and the mature core protein. Interacts with host SLC3A2/4F2hc; the interaction may facilitate viral entry into host cell. Interacts with human PLSCR1. As to quaternary structure, homohexamer. Homoheptamer. Interacts with protease NS2. In terms of assembly, homodimer. Interacts with host SPCS1; this interaction is essential for viral particle assembly. Interacts with envelope glycoprotein E1. Interacts with envelope glycoprotein E2. Interacts with viroporin p7. Interacts with serine protease/helicase NS3. Part of the replication complex composed of NS2, NS3, NS4A, NS4B, NS5A and the RNA-directed RNA polymerase embedded in an ER-derived membranous web. Part of the viral assembly initiation complex composed of NS2, E1, E2, NS3, NS4A, NS5A and the mature core protein. Interacts with protease NS2. Interacts with non-structural protein 4A; this interaction stabilizes the folding of NS3 serine protease. NS3-NS4A interaction is essential for NS3 activation and allows membrane anchorage of the latter. NS3/NS4A complex also prevents phosphorylation of host IRF3, thus preventing the establishment of dsRNA induced antiviral state. Interacts with host MAVS; this interaction leads to the cleavage and inhibition of host MAVS. Interacts with host TICAM1; this interaction leads to the cleavage and inhibition of host TICAM1. Interacts with host TANK-binding kinase/TBK1; this interaction results in the inhibition of the association between TBK1 and IRF3, which leads to the inhibition of IRF3 activation. Interacts with host RBM24. Part of the replication complex composed of NS2, NS3, NS4A, NS4B, NS5A and the RNA-directed RNA polymerase embedded in an ER-derived membranous web. Part of the viral assembly initiation complex composed of NS2, E1, E2, NS3, NS4A, NS5A and the mature core protein. As to quaternary structure, interacts with NS3 serine protease; this interaction stabilizes the folding of NS3 serine protease. NS3-NS4A interaction is essential for NS3 activation and allows membrane anchorage of the latter. Interacts with non-structural protein 5A (via N-terminus). Part of the replication complex composed of NS2, NS3, NS4A, NS4B, NS5A and the RNA-directed RNA polymerase embedded in an ER-derived membranous web. Part of the viral assembly initiation complex composed of NS2, E1, E2, NS3, NS4A, NS5A and the mature core protein. In terms of assembly, homomultimer. Interacts with non-structural protein NS5A. Interacts with host PLA2G4C; this interaction likely initiates the recruitment of replication complexes to lipid droplets. Interacts with host STING; this interaction disrupts the interaction between STING and TBK1 thereby suppressing the interferon signaling. Interacts with host METTL22; this interaction may promote the recruitment of NS4B in the proximity of lipid droplet. Part of the replication complex composed of NS2, NS3, NS4A, NS4B, NS5A and the RNA-directed RNA polymerase embedded in an ER-derived membranous web. Monomer. Homodimer; dimerization is required for RNA-binding. Interacts with the mature core protein. Interacts (via N-terminus) with non-structural protein 4A. Interacts with non-structural protein 4B. Interacts (via region D2) with RNA-directed RNA polymerase. Part of the viral assembly initiation complex composed of NS2, E1, E2, NS3, NS4A, NS5A and the mature core protein. Part of the replication complex composed of NS2, NS3, NS4A, NS4B, NS5A and the RNA-directed RNA polymerase embedded in an ER-derived membranous web. Interacts with host GRB2. Interacts with host BIN1. Interacts with host PIK3R1. Interacts with host SRCAP. Interacts with host FKBP8. Interacts (via C-terminus) with host VAPB (via MSP domain). Interacts with host EIF2AK2/PKR; this interaction leads to disruption of EIF2AK2 dimerization by NS5A and probably allows the virus to evade the innate immune response. Interacts (via N-terminus) with host PACSIN2 (via N-terminus); this interaction attenuates protein kinase C alpha-mediated phosphorylation of PACSIN2 by disrupting the interaction between PACSIN2 and PRKCA. Interacts (via N-terminus) with host SRC kinase (via SH2 domain). Interacts with most Src-family kinases. Interacts with host IFI27 and SKP2; promotes the ubiquitin-mediated proteasomal degradation of NS5A. Interacts with host GPS2. Interacts with host TNFRSF21; this interaction allows the modulation by the virus of JNK, p38 MAPK, STAT3, and Akt signaling pathways in a DR6-dependent manner. Interacts (via N-terminus) with host CIDEB (via N-terminus); this interaction seems to regulate the association of HCV particles with APOE. Interacts with host CHKA/Choline Kinase-alpha; CHKA bridges host PI4KA and NS5A and potentiates NS5A-stimulated PI4KA activity, which then facilitates the targeting of the ternary complex to the ER for viral replication. Interacts with host SPSB2 (via C-terminus); this interaction targets NS5A for ubiquitination and degradation. Interacts with host RAB18; this interaction may promote the association of NS5A and other replicase components with lipid droplets. Interacts (via region D2) with host PPIA/CYPA; the interaction stimulates RNA-binding ability of NS5A and is dependent on the peptidyl-prolyl cis-trans isomerase activity of PPIA/CYPA. Interacts with host TRIM14; this interaction induces the degradation of NS5A. As to quaternary structure, homooligomer. Interacts with non-structural protein 5A. Interacts with host VAPB. Interacts with host PRK2/PKN2. Interacts with host HNRNPA1 and SEPT6; these interactions facilitate the viral replication. Part of the replication complex composed of NS2, NS3, NS4A, NS4B, NS5A and the RNA-directed RNA polymerase embedded in an ER-derived membranous web. Zn(2+) is required as a cofactor. It depends on Mg(2+) as a cofactor. In terms of processing, specific enzymatic cleavages in vivo yield mature proteins. The structural proteins, core, E1, E2 and p7 are produced by proteolytic processing by host signal peptidases. The core protein precursor is synthesized as a 23 kDa, which is retained in the ER membrane through the hydrophobic signal peptide. Cleavage by the signal peptidase releases the 21 kDa mature core protein. The cleavage of the core protein precursor occurs between aminoacids 176 and 188 but the exact cleavage site is not known. Some degraded forms of the core protein appear as well during the course of infection. The other proteins (p7, NS2, NS3, NS4A, NS4B, NS5A and NS5B) are cleaved by the viral proteases. Autoprocessing between NS2 and NS3 is mediated by the NS2 cysteine protease catalytic domain and regulated by the NS3 N-terminal domain. Post-translationally, phosphorylated by host PKC and PKA. Ubiquitinated; mediated by UBE3A and leading to core protein subsequent proteasomal degradation. In terms of processing, highly N-glycosylated. Post-translationally, palmitoylation is required for NS2/3 autoprocessing and E2 recruitment to membranes. Palmitoylated. This modification may play a role in its polymerization or in protein-protein interactions. In terms of processing, cleaved by host caspases which are probably activated by the viral infection. Post-translationally, ubiquitinated. Ubiquitination, most probably at Lys-2350, mediated by host IFI27 and SKP2 leads to proteasomal degradation, restricting viral infection. Ubiquitination by host TRIM22 leads to interruption of viral replication. Phosphorylated on serines in a basal form termed p56. p58 is a hyperphosphorylated form of p56. p56 and p58 coexist in the cell in roughly equivalent amounts. Hyperphosphorylation is dependent on the presence of NS4A. Host CSNK1A1/CKI-alpha, PI4KA or RPS6KB1 kinases may be responsible for NS5A phosphorylation. Phosphorylated NS5A is involved in viral replication. In terms of processing, tyrosine phosphorylation is essential for the interaction with host SRC. Post-translationally, the N-terminus is phosphorylated by host PRK2/PKN2.

It is found in the host endoplasmic reticulum membrane. It localises to the host mitochondrion membrane. The protein resides in the virion. The protein localises to the host cytoplasm. Its subcellular location is the host nucleus. It is found in the host lipid droplet. It localises to the virion membrane. The protein resides in the host mitochondrion. The protein localises to the host cell membrane. Its subcellular location is the host perinuclear region. The enzyme catalyses Hydrolysis of four peptide bonds in the viral precursor polyprotein, commonly with Asp or Glu in the P6 position, Cys or Thr in P1 and Ser or Ala in P1'.. It carries out the reaction a ribonucleoside 5'-triphosphate + H2O = a ribonucleoside 5'-diphosphate + phosphate + H(+). It catalyses the reaction ATP + H2O = ADP + phosphate + H(+). The catalysed reaction is RNA(n) + a ribonucleoside 5'-triphosphate = RNA(n+1) + diphosphate. With respect to regulation, inhibited by the antiviral drug hexamethylene amiloride. Inhibited by amantadine. Inhibition by amantadine appears to be genotype-dependent. Also inhibited by long-alkyl-chain iminosugar derivatives. Activity is up-regulated by PRK2/PKN2-mediated phosphorylation. Functionally, packages viral RNA to form a viral nucleocapsid, and promotes virion budding. Participates in the viral particle production as a result of its interaction with the non-structural protein 5A. Binds RNA and may function as a RNA chaperone to induce the RNA structural rearrangements taking place during virus replication. Modulates viral translation initiation by interacting with viral IRES and 40S ribosomal subunit. Affects various cell signaling pathways, host immunity and lipid metabolism. Prevents the establishment of cellular antiviral state by blocking the interferon-alpha/beta (IFN-alpha/beta) and IFN-gamma signaling pathways and by blocking the formation of phosphorylated STAT1 and promoting ubiquitin-mediated proteasome-dependent degradation of STAT1. Activates STAT3 leading to cellular transformation. Regulates the activity of cellular genes, including c-myc and c-fos. May repress the promoter of p53, and sequester CREB3 and SP110 isoform 3/Sp110b in the cytoplasm. Represses cell cycle negative regulating factor CDKN1A, thereby interrupting an important check point of normal cell cycle regulation. Targets transcription factors involved in the regulation of inflammatory responses and in the immune response: suppresses NF-kappa-B activation, and activates AP-1. Binds to dendritic cells (DCs) via C1QR1, resulting in down-regulation of T-lymphocytes proliferation. Alters lipid metabolism by interacting with hepatocellular proteins involved in lipid accumulation and storage. Induces up-regulation of FAS promoter activity, and thereby contributes to the increased triglyceride accumulation in hepatocytes (steatosis). In terms of biological role, forms a heterodimer with envelope glycoprotein E2, which mediates virus attachment to the host cell, virion internalization through clathrin-dependent endocytosis and fusion with host membrane. Fusion with the host cell is most likely mediated by both E1 and E2, through conformational rearrangements of the heterodimer required for fusion rather than a classical class II fusion mechanism. E1/E2 heterodimer binds host apolipoproteins such as APOB and APOE thereby forming a lipo-viro-particle (LVP). APOE associated to the LVP allows the initial virus attachment to cell surface receptors such as the heparan sulfate proteoglycans (HSPGs), syndecan-1 (SDC1), syndecan-1 (SDC2), the low-density lipoprotein receptor (LDLR) and scavenger receptor class B type I (SCARB1). The cholesterol transfer activity of SCARB1 allows E2 exposure and binding of E2 to SCARB1 and the tetraspanin CD81. E1/E2 heterodimer binding on CD81 activates the epithelial growth factor receptor (EGFR) signaling pathway. Diffusion of the complex E1/E2-EGFR-SCARB1-CD81 to the cell lateral membrane allows further interaction with Claudin 1 (CLDN1) and occludin (OCLN) to finally trigger HCV entry. Forms a heterodimer with envelope glycoprotein E1, which mediates virus attachment to the host cell, virion internalization through clathrin-dependent endocytosis and fusion with host membrane. Fusion with the host cell is most likely mediated by both E1 and E2, through conformational rearrangements of the heterodimer required for fusion rather than a classical class II fusion mechanism. The interaction between E2 and host apolipoprotein E/APOE allows the proper assembly, maturation and infectivity of the viral particles. This interaction is probably promoted via the up-regulation of cellular autophagy by the virus. E1/E2 heterodimer binds host apolipoproteins such as APOB and APOE thereby forming a lipo-viro-particle (LVP). APOE associated to the LVP allows the initial virus attachment to cell surface receptors such as the heparan sulfate proteoglycans (HSPGs), syndecan-1 (SDC1), syndecan-1 (SDC2), the low-density lipoprotein receptor (LDLR) and scavenger receptor class B type I (SCARB1). The cholesterol transfer activity of SCARB1 allows E2 exposure and binding of E2 to SCARB1 and the tetraspanin CD81. E1/E2 heterodimer binding on CD81 activates the epithelial growth factor receptor (EGFR) signaling pathway. Diffusion of the complex E1/E2-EGFR-SCARB1-CD81 to the cell lateral membrane allows further interaction with Claudin 1 (CLDN1) and occludin (OCLN) to finally trigger HCV entry. Inhibits host EIF2AK2/PKR activation, preventing the establishment of an antiviral state. Viral ligand for CD209/DC-SIGN and CLEC4M/DC-SIGNR, which are respectively found on DCs, and on liver sinusoidal endothelial cells and macrophage-like cells of lymph node sinuses. These interactions allow the capture of circulating HCV particles by these cells and subsequent facilitated transmission to permissive cells such as hepatocytes and lymphocyte subpopulations. The interaction between E2 and host amino acid transporter complex formed by SLC3A2 and SLC7A5/LAT1 may facilitate viral entry into host cell. Its function is as follows. Ion channel protein that acts as a viroporin and plays an essential role in the assembly, envelopment and secretion of viral particles. Participates in virus envelopment by coordinating the encounter between NS5A and NS2-based assembly sites loaded with E1/E2 heterodimer, which subsequently leads to nucleocapsid envelopment. Creates a pore in acidic organelles and releases Ca(2+) and H(+) in the cytoplasm of infected cells, leading to a productive viral infection. High levels of cytoplasmic Ca(2+) may trigger membrane trafficking and transport of viral ER-associated proteins to viroplasms, sites of viral genome replication. The release of Ca(2+) may also activate the inflamasome leading to chronic inflammation. Targets also host mitochondria and induces mitochondrial depolarization. In addition of its role as a viroporin, acts as a lipid raft adhesion factor. Functionally, cysteine protease required for the proteolytic auto-cleavage between the non-structural proteins NS2 and NS3. The N-terminus of NS3 is required for the function of NS2 protease (active region NS2-3). Promotes the initiation of viral particle assembly by mediating the interaction between structural and non-structural proteins. In terms of biological role, displays three enzymatic activities: serine protease with a chymotrypsin-like fold, NTPase and RNA helicase. NS3 serine protease, in association with NS4A, is responsible for the cleavages of NS3-NS4A, NS4A-NS4B, NS4B-NS5A and NS5A-NS5B. The NS3/NS4A complex prevents phosphorylation of host IRF3, thus preventing the establishment of dsRNA induced antiviral state. The NS3/NS4A complex induces host amino acid transporter component SLC3A2, thus contributing to HCV propagation. NS3 RNA helicase binds to RNA and unwinds both dsDNA and dsRNA in the 3' to 5' direction, and likely resolves RNA complicated stable secondary structures in the template strand. Binds a single ATP and catalyzes the unzipping of a single base pair of dsRNA. Inhibits host antiviral proteins TBK1 and IRF3 thereby preventing the establishment of an antiviral state. Cleaves host MAVS/CARDIF thereby preventing the establishment of an antiviral state. Cleaves host TICAM1/TRIF, thereby disrupting TLR3 signaling and preventing the establishment of an antiviral state. Peptide cofactor which forms a non-covalent complex with the N-terminal of NS3 serine protease. The NS3/NS4A complex prevents phosphorylation of host IRF3, thus preventing the establishment of dsRNA induced antiviral state. The NS3/NS4A complex induces host amino acid transporter component SLC3A2, thus contributing to HCV propagation. Its function is as follows. Induces a specific membrane alteration that serves as a scaffold for the virus replication complex. This membrane alteration gives rise to the so-called ER-derived membranous web that contains the replication complex. NS4B self-interaction contributes to its function in membranous web formation. Promotes host TRIF protein degradation in a CASP8-dependent manner thereby inhibiting host TLR3-mediated interferon signaling. Disrupts the interaction between STING and TBK1 contributing to the inhibition of interferon signaling. Functionally, phosphorylated protein that is indispensable for viral replication and assembly. Both hypo- and hyperphosphorylated states are required for the viral life cycle. The hyperphosphorylated form of NS5A is an inhibitor of viral replication. Involved in RNA-binding and especially in binding to the viral genome. Zinc is essential for RNA-binding. Participates in the viral particle production as a result of its interaction with the viral mature core protein. Its interaction with host VAPB may target the viral replication complex to vesicles. Down-regulates viral IRES translation initiation. Mediates interferon resistance, presumably by interacting with and inhibiting host EIF2AK2/PKR. Prevents BIN1-induced apoptosis. Acts as a transcriptional activator of some host genes important for viral replication when localized in the nucleus. Via the interaction with host PACSIN2, modulates lipid droplet formation in order to promote virion assembly. Modulates TNFRSF21/DR6 signaling pathway for viral propagation. In terms of biological role, RNA-dependent RNA polymerase that performs primer-template recognition and RNA synthesis during viral replication. Initiates RNA transcription/replication at a flavin adenine dinucleotide (FAD), resulting in a 5'- FAD cap on viral RNAs. In this way, recognition of viral 5' RNA by host pattern recognition receptors can be bypassed, thereby evading activation of antiviral pathways. The chain is Genome polyprotein from Homo sapiens (Human).